We begin with the raw amino-acid sequence, 209 residues long: Uracil phosphoribosyltransferase (209 aa).

Residues R79, R104, and 131 to 139 (DPMLATGNS) each bind 5-phospho-alpha-D-ribose 1-diphosphate. Residues I194 and 199–201 (GDA) each bind uracil. D200 serves as a coordination point for 5-phospho-alpha-D-ribose 1-diphosphate.

Belongs to the UPRTase family. Mg(2+) is required as a cofactor.

It carries out the reaction UMP + diphosphate = 5-phospho-alpha-D-ribose 1-diphosphate + uracil. The protein operates within pyrimidine metabolism; UMP biosynthesis via salvage pathway; UMP from uracil: step 1/1. Its activity is regulated as follows. Allosterically activated by GTP. Functionally, catalyzes the conversion of uracil and 5-phospho-alpha-D-ribose 1-diphosphate (PRPP) to UMP and diphosphate. The chain is Uracil phosphoribosyltransferase from Delftia acidovorans (strain DSM 14801 / SPH-1).